The sequence spans 581 residues: Phosphatidylinositol N-acetylglucosaminyltransferase subunit Q (581 aa).

5 helical membrane-spanning segments follow: residues 276–298 (ANMLVSVLLDVALGLLLLSWLHS), 344–366 (LGRFFLYHIHLWISYIHLMSPFI), 381–403 (LTVALSIFSDIIALLTFHIYCFY), 446–468 (LFIGTLLFTILVFLLPTTALYYL), and 478–500 (ITVQGLIHLLVDLINSLPLYSLG).

It belongs to the PIGQ family. In terms of assembly, component of the glycosylphosphatidylinositol-N-acetylglucosaminyltransferase (GPI-GnT) complex composed at least by PIGA, PIGC, PIGH, PIGP, PIGQ, PIGY and DPM2. Interacts with PIGA, PIGH and PIGC.

It localises to the membrane. It functions in the pathway glycolipid biosynthesis; glycosylphosphatidylinositol-anchor biosynthesis. Its function is as follows. Part of the glycosylphosphatidylinositol-N-acetylglucosaminyltransferase (GPI-GnT) complex that catalyzes the transfer of N-acetylglucosamine from UDP-N-acetylglucosamine to phosphatidylinositol and participates in the first step of GPI biosynthesis. This chain is Phosphatidylinositol N-acetylglucosaminyltransferase subunit Q, found in Mus musculus (Mouse).